Consider the following 226-residue polypeptide: Brachyurin (226 aa).

The region spanning 1–223 (IVGGVEAVPN…FLDWIQTQTG (223 aa)) is the Peptidase S1 domain. Cys-26 and Cys-42 are oxidised to a cystine. Active-site charge relay system residues include His-41 and Asp-87. 2 disulfide bridges follow: Cys-151–Cys-164 and Cys-174–Cys-200. Catalysis depends on Ser-178, which acts as the Charge relay system.

The protein belongs to the peptidase S1 family.

The enzyme catalyses Hydrolysis of proteins, with broad specificity for peptide bonds. Native collagen is cleaved about 75% of the length of the molecule from the N-terminus. Low activity on small molecule substrates of both trypsin and chymotrypsin.. Functionally, this enzyme is a serine protease capable of degrading the native triple helix of collagen. The sequence is that of Brachyurin from Leptuca pugilator (Atlantic sand fiddler crab).